A 208-amino-acid polypeptide reads, in one-letter code: MVSRRVQALLDQLRVQGIQDEQVLNALAAVPREKFVDEAFEQKAWDNIALPIGQGQTISQPYMVARMTELLELTPQSRVLEIGTGSGYQTAILAHLVQHVCSVERIKGLQWQARRRLKNLDLHNVSTRHGDGWQGWQARAPFDAIIVTAAPPEIPTALMTQLDEGGILVLPVGEEHQYLKRVRRRGGEFIIDTVEAVRFVPLVKGELA.

Serine 59 is an active-site residue.

It belongs to the methyltransferase superfamily. L-isoaspartyl/D-aspartyl protein methyltransferase family.

The protein resides in the cytoplasm. It carries out the reaction [protein]-L-isoaspartate + S-adenosyl-L-methionine = [protein]-L-isoaspartate alpha-methyl ester + S-adenosyl-L-homocysteine. Its function is as follows. Catalyzes the methyl esterification of L-isoaspartyl residues in peptides and proteins that result from spontaneous decomposition of normal L-aspartyl and L-asparaginyl residues. It plays a role in the repair and/or degradation of damaged proteins. The sequence is that of Protein-L-isoaspartate O-methyltransferase from Escherichia coli O7:K1 (strain IAI39 / ExPEC).